Here is a 646-residue protein sequence, read N- to C-terminus: Threonine--tRNA ligase (646 aa).

In terms of domain architecture, TGS spans 1–61 (MIKITFPDGS…NEDANFVLYK (61 aa)). The interval 242–541 (DHRKIGKEMD…LIEHTAGKFP (300 aa)) is catalytic. Residues Cys337, His388, and His518 each contribute to the Zn(2+) site.

The protein belongs to the class-II aminoacyl-tRNA synthetase family. As to quaternary structure, homodimer. It depends on Zn(2+) as a cofactor.

It is found in the cytoplasm. The catalysed reaction is tRNA(Thr) + L-threonine + ATP = L-threonyl-tRNA(Thr) + AMP + diphosphate + H(+). Catalyzes the attachment of threonine to tRNA(Thr) in a two-step reaction: L-threonine is first activated by ATP to form Thr-AMP and then transferred to the acceptor end of tRNA(Thr). Also edits incorrectly charged L-seryl-tRNA(Thr). In Phocaeicola vulgatus (strain ATCC 8482 / DSM 1447 / JCM 5826 / CCUG 4940 / NBRC 14291 / NCTC 11154) (Bacteroides vulgatus), this protein is Threonine--tRNA ligase.